Consider the following 340-residue polypeptide: Flap endonuclease 1 (340 aa).

Positions 1 to 98 (MGVPIGEIIP…KELEKRREAR (98 aa)) are N-domain. Positions 27, 80, 152, 154, 173, 175, and 236 each coordinate Mg(2+). An I-domain region spans residues 116–258 (EARKYAQRAT…KALEIVRHSK (143 aa)). Residues 330–338 (KQSTLESWF) are interaction with PCNA.

The protein belongs to the XPG/RAD2 endonuclease family. FEN1 subfamily. In terms of assembly, interacts with PCNA. PCNA stimulates the nuclease activity without altering cleavage specificity. Mg(2+) is required as a cofactor.

Its function is as follows. Structure-specific nuclease with 5'-flap endonuclease and 5'-3' exonuclease activities involved in DNA replication and repair. During DNA replication, cleaves the 5'-overhanging flap structure that is generated by displacement synthesis when DNA polymerase encounters the 5'-end of a downstream Okazaki fragment. Binds the unpaired 3'-DNA end and kinks the DNA to facilitate 5' cleavage specificity. Cleaves one nucleotide into the double-stranded DNA from the junction in flap DNA, leaving a nick for ligation. Also involved in the base excision repair (BER) pathway. Acts as a genome stabilization factor that prevents flaps from equilibrating into structures that lead to duplications and deletions. Also possesses 5'-3' exonuclease activity on nicked or gapped double-stranded DNA. The sequence is that of Flap endonuclease 1 from Pyrococcus furiosus (strain ATCC 43587 / DSM 3638 / JCM 8422 / Vc1).